The chain runs to 308 residues: ADP-L-glycero-D-manno-heptose-6-epimerase (308 aa).

NADP(+) contacts are provided by residues 10 to 11 (MI), 31 to 32 (DN), K38, K53, 75 to 79 (EGACS), and N92. Residue Y140 is the Proton acceptor of the active site. An NADP(+)-binding site is contributed by K144. N169 is a binding site for substrate. The NADP(+) site is built by V170 and K178. The active-site Proton acceptor is the K178. Residues S180, H187, 201 to 204 (FEGS), R209, and Y272 contribute to the substrate site.

It belongs to the NAD(P)-dependent epimerase/dehydratase family. HldD subfamily. Homopentamer. NADP(+) is required as a cofactor.

The enzyme catalyses ADP-D-glycero-beta-D-manno-heptose = ADP-L-glycero-beta-D-manno-heptose. It participates in nucleotide-sugar biosynthesis; ADP-L-glycero-beta-D-manno-heptose biosynthesis; ADP-L-glycero-beta-D-manno-heptose from D-glycero-beta-D-manno-heptose 7-phosphate: step 4/4. Its function is as follows. Catalyzes the interconversion between ADP-D-glycero-beta-D-manno-heptose and ADP-L-glycero-beta-D-manno-heptose via an epimerization at carbon 6 of the heptose. The sequence is that of ADP-L-glycero-D-manno-heptose-6-epimerase from Actinobacillus pleuropneumoniae serotype 5b (strain L20).